A 349-amino-acid chain; its full sequence is tRNA pseudouridine synthase D (349 aa).

Phe27 serves as a coordination point for substrate. Asp80 (nucleophile) is an active-site residue. Asn129 contacts substrate. In terms of domain architecture, TRUD spans 155 to 303 (GVPNYFGAQR…VEAARRAMLL (149 aa)). Phe329 contributes to the substrate binding site.

Belongs to the pseudouridine synthase TruD family.

It catalyses the reaction uridine(13) in tRNA = pseudouridine(13) in tRNA. Its function is as follows. Responsible for synthesis of pseudouridine from uracil-13 in transfer RNAs. In Escherichia coli O81 (strain ED1a), this protein is tRNA pseudouridine synthase D.